Consider the following 156-residue polypeptide: Radiation-inducible immediate-early gene IEX-1 (156 aa).

Residues methionine 1 to serine 62 are disordered. The Cytoplasmic segment spans residues methionine 1 to proline 82. Threonine 18 carries the phosphothreonine; by MAPK1 modification. Residue serine 31 is modified to Phosphoserine. A compositionally biased stretch (low complexity) spans proline 44–serine 55. The chain crosses the membrane as a helical; Signal-anchor for type II membrane protein span at residues alanine 83–leucine 99. Residues methionine 100 to phenylalanine 156 lie on the Extracellular side of the membrane. Threonine 123 carries the post-translational modification Phosphothreonine; by MAPK1. Serine 126 bears the Phosphoserine; by MAPK1 mark. The N-linked (GlcNAc...) asparagine glycan is linked to asparagine 133.

The protein belongs to the IER3 family. As to quaternary structure, interacts with the PPP2R5C-PP2A holoenzyme and ERK kinases; regulates ERK dephosphorylation. Post-translationally, phosphorylated at Thr-18, Thr-123 and Ser-126 by MAPK1/ERK2 and probably MAPK3/ERK1. Upon phosphorylation by MAPK1/ERK2 and MAPK3/ERK1, acquires the ability to inhibit cell death induced by various stimuli. In terms of processing, glycosylated.

Its subcellular location is the membrane. Functionally, may play a role in the ERK signaling pathway by inhibiting the dephosphorylation of ERK by phosphatase PP2A-PPP2R5C holoenzyme. Also acts as an ERK downstream effector mediating survival. As a member of the NUPR1/RELB/IER3 survival pathway, may provide pancreatic ductal adenocarcinoma with remarkable resistance to cell stress, such as starvation or gemcitabine treatment. The polypeptide is Radiation-inducible immediate-early gene IEX-1 (IER3) (Homo sapiens (Human)).